A 248-amino-acid polypeptide reads, in one-letter code: D-xylose 1-dehydrogenase (248 aa).

Asp-42, Asp-68, Asn-91, Tyr-156, Lys-160, Val-189, and Thr-191 together coordinate NAD(+). Tyr-156 (proton acceptor) is an active-site residue.

Belongs to the short-chain dehydrogenases/reductases (SDR) family.

It carries out the reaction D-xylose + NAD(+) = D-xylono-1,5-lactone + NADH + H(+). Its function is as follows. Involved in the degradation of D-xylose. Catalyzes the initial reaction in the xylose utilization pathway by oxydizing D-xylose into D-xylonolactone. Shows some activity with L-arabinose and D-lyxose, but D-xylose is clearly the best substrate. Has no activity with D-ribose, D-glucose, D-galactose or D-mannose. The polypeptide is D-xylose 1-dehydrogenase (Caulobacter vibrioides (strain ATCC 19089 / CIP 103742 / CB 15) (Caulobacter crescentus)).